We begin with the raw amino-acid sequence, 596 residues long: PDZ and LIM domain protein 5 (596 aa).

Residue Ser-2 is modified to N-acetylserine. Ser-2 carries the post-translational modification Phosphoserine. Positions 2–85 constitute a PDZ domain; that stretch reads SNYSVSLVGP…SLNMTLQRAS (84 aa). Lys-89 carries the N6-acetyllysine; alternate modification. At Lys-89 the chain carries N6-succinyllysine; alternate. Lys-89 is covalently cross-linked (Glycyl lysine isopeptide (Lys-Gly) (interchain with G-Cter in SUMO2); alternate). Phosphoserine is present on residues Ser-111, Ser-134, and Ser-137. Disordered regions lie at residues 121-165, 196-240, and 255-340; these read NNMA…SPSP, AGKT…GPPR, and THSD…RPGV. Residues 134 to 143 are compositionally biased toward polar residues; it reads SVSSPKVTSI. Positions 144-165 are enriched in low complexity; it reads PSPSSAFTPAHATTSSHASPSP. Polar residues-rich tracts occupy residues 205–219 and 226–237; these read RQPT…TSQE and RGSQGDSKQQNG. A phosphoserine mark is found at Ser-228 and Ser-260. Basic and acidic residues-rich tracts occupy residues 258–273 and 293–304; these read DASK…DWRP and EHLKESEADNTK. Over residues 305 to 335 the composition is skewed to polar residues; that stretch reads KANNSQEPSPQLASSVASTRSMPESLDSPTS. Ser-309, Ser-313, and Ser-322 each carry phosphoserine. N6-acetyllysine is present on Lys-350. A disordered region spans residues 354 to 381; the sequence is STGVIKSPSWQRPNQGVPSTGRISNSAT. A phosphoserine mark is found at Ser-360 and Ser-362. Positions 361 to 381 are enriched in polar residues; sequence PSWQRPNQGVPSTGRISNSAT. LIM zinc-binding domains are found at residues 418 to 477, 477 to 536, and 536 to 596; these read PMCA…FFAP, PECG…LFGT, and TICH…SVNF.

As to quaternary structure, interacts with various PKC isoforms through the LIM domains. Interacts with actin and alpha-actinin through the PDZ domain. Interacts (via LIM domains) with SIPA1L1/SPAR; this interaction may occur preferentially with isoform 1. In terms of tissue distribution, heart and skeletal muscle specific. Expression is commonly increased in the brain of patients with bipolar disorder, schizophrenia, and major depression.

The protein resides in the postsynaptic density. It is found in the presynapse. The protein localises to the postsynapse. It localises to the cytoplasm. Its subcellular location is the cytosol. In terms of biological role, may play an important role in the heart development by scaffolding PKC to the Z-disk region. May play a role in the regulation of cardiomyocyte expansion. Isoforms lacking the LIM domains may negatively modulate the scaffolding activity of isoform 1. Overexpression promotes the development of heart hypertrophy. Contributes to the regulation of dendritic spine morphogenesis in neurons. May be required to restrain postsynaptic growth of excitatory synapses. Isoform 1, but not isoform 2, expression favors spine thinning and elongation. This chain is PDZ and LIM domain protein 5, found in Homo sapiens (Human).